Consider the following 233-residue polypeptide: UPF0128 protein MJ1463 (233 aa).

It belongs to the UPF0128 family.

This is UPF0128 protein MJ1463 from Methanocaldococcus jannaschii (strain ATCC 43067 / DSM 2661 / JAL-1 / JCM 10045 / NBRC 100440) (Methanococcus jannaschii).